Reading from the N-terminus, the 184-residue chain is Deoxyuridine 5'-triphosphate nucleotidohydrolase (184 aa).

Residues 1 to 16 are compositionally biased toward polar residues; the sequence is MPHTQTDAHQNNQENF. The segment at 1–25 is disordered; that stretch reads MPHTQTDAHQNNQENFSSSLISSRP. Residues 96–98, Asn-109, 113–115, and Lys-123 contribute to the substrate site; these read RSG and TID. The interval 165 to 184 is disordered; the sequence is STKNTVGNRGAGGFGSTGHD. A compositionally biased stretch (gly residues) spans 173 to 184; the sequence is RGAGGFGSTGHD.

It belongs to the dUTPase family. Requires Mg(2+) as cofactor.

It carries out the reaction dUTP + H2O = dUMP + diphosphate + H(+). It participates in pyrimidine metabolism; dUMP biosynthesis; dUMP from dCTP (dUTP route): step 2/2. In terms of biological role, this enzyme is involved in nucleotide metabolism: it produces dUMP, the immediate precursor of thymidine nucleotides and it decreases the intracellular concentration of dUTP so that uracil cannot be incorporated into DNA. This Bartonella henselae (strain ATCC 49882 / DSM 28221 / CCUG 30454 / Houston 1) (Rochalimaea henselae) protein is Deoxyuridine 5'-triphosphate nucleotidohydrolase.